The sequence spans 772 residues: Tubulin monoglycylase TTLL3 (772 aa).

The disordered stretch occupies residues 50–81 (PTLLPPQKDLDSSAMGDSDTTEDEDEDEDEEF). Acidic residues predominate over residues 68-81 (DTTEDEDEDEDEEF). The region spanning 151–510 (ARNVLKLVVK…RMLDRNCDTG (360 aa)) is the TTL domain. ATP is bound by residues Lys283, 289-290 (RG), 321-324 (QKYI), 334-336 (KFD), and 378-379 (CN). Residue Arg289 coordinates a protein. Position 381 (Ser381) interacts with L-glutamate. Mg(2+) is bound by residues Asp456, Glu469, and Asn471. Glu469 contributes to the ATP binding site.

The cofactor is Mg(2+). In terms of tissue distribution, expressed in brain, heart, kidney, testis, liver, lung, muscle, spleen, trachea and colon.

Its subcellular location is the cytoplasm. The protein localises to the cytoskeleton. It localises to the cell projection. The protein resides in the cilium. It is found in the cilium axoneme. Its subcellular location is the flagellum axoneme. The catalysed reaction is L-glutamyl-[protein] + glycine + ATP = glycyl-L-glutamyl-[protein] + ADP + phosphate + H(+). Monoglycylase which modifies alpha- and beta-tubulin, adding a single glycine on the gamma-carboxyl groups of specific glutamate residues to generate monoglycine side chains within the C-terminal tail of tubulin. Not involved in elongation step of the polyglycylation reaction. Preferentially glycylates a beta-tail peptide over the alpha-tail, although shifts its preference toward alpha-tail as beta-tail glutamylation increases. Competes with polyglutamylases for modification site on beta-tubulin substrate, thereby creating an anticorrelation between glycylation and glutamylation reactions. Together with TTLL8, mediates microtubule glycylation of primary and motile cilia, which is essential for their stability and maintenance. Involved in microtubule glycylation of primary cilia in colon which controls cell proliferation of epithelial cells and plays an essential role in colon cancer development. Together with TTLL8, glycylates sperm flagella which regulates axonemal dynein motor activity, thereby controlling flagellar beat, directional sperm swimming and male fertility. In Homo sapiens (Human), this protein is Tubulin monoglycylase TTLL3.